A 520-amino-acid chain; its full sequence is Protein FAM124A (520 aa).

2 disordered regions span residues 1–34 and 311–334; these read MDRK…ELSV and FKSG…SQMD. The segment covering 20–32 has biased composition (low complexity); the sequence is SDYSRLSSTSSEL.

This sequence belongs to the FAM124 family.

The polypeptide is Protein FAM124A (fam124a) (Xenopus laevis (African clawed frog)).